The primary structure comprises 189 residues: Group XIIA secretory phospholipase A2 (189 aa).

An N-terminal signal peptide occupies residues 1–22; it reads MALLSRPALTLLLLLMAAVVRC. Ca(2+) contacts are provided by Gly-88, Pro-90, and Phe-92. The active site involves His-110. Residue Asp-111 participates in Ca(2+) binding. Asp-125 is an active-site residue.

Ca(2+) serves as cofactor. Abundantly expressed in heart, skeletal muscle, kidney, liver and pancreas.

The protein resides in the secreted. Its subcellular location is the cytoplasm. The catalysed reaction is a 1,2-diacyl-sn-glycero-3-phosphocholine + H2O = a 1-acyl-sn-glycero-3-phosphocholine + a fatty acid + H(+). Its function is as follows. PA2 catalyzes the calcium-dependent hydrolysis of the 2-acyl groups in 3-sn-phosphoglycerides. Does not exhibit detectable activity toward sn-2-arachidonoyl- or linoleoyl-phosphatidylcholine or -phosphatidylethanolamine. The chain is Group XIIA secretory phospholipase A2 (PLA2G12A) from Homo sapiens (Human).